The primary structure comprises 117 residues: Large ribosomal subunit protein uL18 (117 aa).

The protein belongs to the universal ribosomal protein uL18 family. In terms of assembly, part of the 50S ribosomal subunit; part of the 5S rRNA/L5/L18/L25 subcomplex. Contacts the 5S and 23S rRNAs.

Functionally, this is one of the proteins that bind and probably mediate the attachment of the 5S RNA into the large ribosomal subunit, where it forms part of the central protuberance. The sequence is that of Large ribosomal subunit protein uL18 from Pectobacterium atrosepticum (strain SCRI 1043 / ATCC BAA-672) (Erwinia carotovora subsp. atroseptica).